A 336-amino-acid polypeptide reads, in one-letter code: Potassium channel subfamily K member 1 (336 aa).

Residues 1–20 (MLQSLAGSSCVRLVERHRSA) are Cytoplasmic-facing. The helical transmembrane segment at 21–41 (RCFGFLVLGYLLYLVFGAVVF) threads the bilayer. The Extracellular portion of the chain corresponds to 42 to 103 (SSVELPYEDL…SNASGNWNWD (62 aa)). N-linked (GlcNAc...) asparagine glycosylation occurs at Asn-95. The segment at residues 104–116 (FTSALFFASTVLS) is an intramembrane region (helical). Residues 117–122 (TTGYGH) lie within the membrane without spanning it. The tract at residues 117–122 (TTGYGH) is selectivity filter 1. At 123–132 (TVPLSDGGKA) the chain is on the extracellular side. Residues 133 to 156 (FCIIYSVIGIPFTLLFLTAVVQRI) traverse the membrane as a helical segment. Residues 157–181 (TVHVTRRPVLYFHIRWGFSKQVVAI) are Cytoplasmic-facing. Residues 182–202 (VHAVLLGFVTVSCFFFIPAAV) traverse the membrane as a helical segment. The Extracellular segment spans residues 203 to 211 (FSVLEDDWN). The helical intramembrane region spans 212–224 (FLESFYFCFISLS). Residues 225-230 (TIGLGD) are selectivity filter 2. The stretch at 225–231 (TIGLGDY) is an intramembrane region. Residues 232–243 (VPGEGYNQKFRE) lie on the Extracellular side of the membrane. The chain crosses the membrane as a helical span at residues 244 to 267 (LYKIGITCYLLLGLIAMLVVLETF). Residues 268–336 (CELHELKKFR…SACMDGPANH (69 aa)) are Cytoplasmic-facing. Lys-274 participates in a covalent cross-link: Glycyl lysine isopeptide (Lys-Gly) (interchain with G-Cter in SUMO). The interval 293 to 299 (IIEHDQL) is important for intracellular retention in recycling endosomes. Residues 315-336 (QKQNEPFVATQSSACMDGPANH) form a disordered region. Ser-326 carries the phosphoserine modification.

This sequence belongs to the two pore domain potassium channel (TC 1.A.1.8) family. In terms of assembly, homodimer; disulfide-linked. Heterodimer with KCNK2; disulfide-linked. In astrocytes, forms mostly heterodimeric potassium channels with KCNK2, with only a minor proportion of functional channels containing homodimeric KCNK1. Interacts with KCNK3 and KCNK9, forming functional heterodimeric channels. Interacts with GNG4. Identified in a complex with PSD and ARF6; interacts only with PSD that is bound to ARF6. Interacts with UBE2I. Post-translationally, sumoylation is controversial. Sumoylated by UBE2I. Not sumoylated when expressed in xenopus oocytes or mammalian cells. Sumoylation inactivates the channel, but does not interfere with expression at the cell membrane. Sumoylation of a single subunit is sufficient to silence the dimeric channel. Sumoylation of KCNK1 is sufficient to silence heterodimeric channels formed by KCNK1 and KCNK3 or KCNK9. Desumoylated by SENP1; this activates the channel. Desumoylated by SENP1; this strongly increases halothane-mediated activation of heterodimeric channels formed with KCNK9. SENP1 treatment has no effect.

It is found in the cell membrane. The protein resides in the recycling endosome. Its subcellular location is the synaptic cell membrane. The protein localises to the cytoplasmic vesicle. It localises to the perikaryon. It is found in the cell projection. The protein resides in the dendrite. Its subcellular location is the apical cell membrane. It catalyses the reaction K(+)(in) = K(+)(out). The catalysed reaction is NH4(+)(in) = NH4(+)(out). The enzyme catalyses Na(+)(in) = Na(+)(out). It carries out the reaction Rb(+)(in) = Rb(+)(out). It catalyses the reaction Cs(+)(in) = Cs(+)(out). The catalysed reaction is Li(+)(in) = Li(+)(out). The enzyme catalyses L-glutamate(out) = L-glutamate(in). It carries out the reaction chloride(in) = chloride(out). In terms of biological role, ion channel that contributes to passive transmembrane potassium transport and to the regulation of the resting membrane potential in brain astrocytes, but also in kidney and in other tissues. Forms dimeric channels through which potassium ions pass in accordance with their electrochemical gradient. The channel is selective for K(+) ions at physiological potassium concentrations and at neutral pH, but becomes permeable to Na(+) at subphysiological K(+) levels, and upon acidification of the extracellular medium. The homodimer has very low potassium channel activity, when expressed in heterologous systems, and can function as weakly inward rectifying potassium channel. Channel activity is modulated by activation of serotonin receptors. Heterodimeric channels containing KCNK1 and KCNK2 have much higher activity, and may represent the predominant form in astrocytes. Heterodimeric channels containing KCNK1 and KCNK3 or KCNK9 have much higher activity. Heterodimeric channels formed by KCNK1 and KCNK9 may contribute to halothane-sensitive currents. Mediates outward rectifying potassium currents in dentate gyrus granule cells and contributes to the regulation of their resting membrane potential. Contributes to the regulation of action potential firing in dentate gyrus granule cells and down-regulates their intrinsic excitability. In astrocytes, the heterodimer formed by KCNK1 and KCNK2 is required for rapid glutamate release in response to activation of G-protein coupled receptors, such as F2R and CNR1. Required for normal ion and water transport in the kidney. Contributes to the regulation of the resting membrane potential of pancreatic beta cells. The low channel activity of homodimeric KCNK1 may be due to sumoylation. The low channel activity may be due to rapid internalization from the cell membrane and retention in recycling endosomes. Permeable to monovalent cations with ion selectivity for K(+) &gt; Rb(+) &gt;&gt; NH4(+) &gt;&gt; Cs(+) = Na(+) = Li(+). This chain is Potassium channel subfamily K member 1, found in Pongo abelii (Sumatran orangutan).